A 551-amino-acid polypeptide reads, in one-letter code: Dihydroxy-acid dehydratase (551 aa).

Residue Asp-78 coordinates Mg(2+). Cys-119 contributes to the [2Fe-2S] cluster binding site. Residues Asp-120 and Lys-121 each coordinate Mg(2+). Lys-121 carries the N6-carboxylysine modification. Cys-191 contacts [2Fe-2S] cluster. Position 442 (Glu-442) interacts with Mg(2+). The active-site Proton acceptor is the Ser-468.

The protein belongs to the IlvD/Edd family. In terms of assembly, homodimer. The cofactor is [2Fe-2S] cluster. Mg(2+) is required as a cofactor.

It catalyses the reaction (2R)-2,3-dihydroxy-3-methylbutanoate = 3-methyl-2-oxobutanoate + H2O. The enzyme catalyses (2R,3R)-2,3-dihydroxy-3-methylpentanoate = (S)-3-methyl-2-oxopentanoate + H2O. It participates in amino-acid biosynthesis; L-isoleucine biosynthesis; L-isoleucine from 2-oxobutanoate: step 3/4. Its pathway is amino-acid biosynthesis; L-valine biosynthesis; L-valine from pyruvate: step 3/4. In terms of biological role, functions in the biosynthesis of branched-chain amino acids. Catalyzes the dehydration of (2R,3R)-2,3-dihydroxy-3-methylpentanoate (2,3-dihydroxy-3-methylvalerate) into 2-oxo-3-methylpentanoate (2-oxo-3-methylvalerate) and of (2R)-2,3-dihydroxy-3-methylbutanoate (2,3-dihydroxyisovalerate) into 2-oxo-3-methylbutanoate (2-oxoisovalerate), the penultimate precursor to L-isoleucine and L-valine, respectively. This Halothermothrix orenii (strain H 168 / OCM 544 / DSM 9562) protein is Dihydroxy-acid dehydratase.